The chain runs to 208 residues: Effector protein MavE (208 aa).

An NPxY eukaryotic motif motif is present at residues 77 to 80; sequence NPRY. The helical transmembrane segment at 184 to 204 threads the bilayer; sequence VLFPFVAATVAVAATAASVLF.

In terms of assembly, homotrimer.

The protein localises to the secreted. It is found in the host vacuole. It localises to the host pathogen-containing vacuole. Its subcellular location is the host pathogen-containing vacuole membrane. Virulence effector that is indispensable for endoplasmic reticulum (ER)-mediated remodeling of the Legionella pneumophila-containing vacuole (LCV) and lysosomal evasion. Essential for intracellular replication in human monocyte-derived macrophages (hMDMs) and amoebae, as well as for intrapulmonary proliferation in mice. This is Effector protein MavE from Legionella pneumophila subsp. pneumophila (strain Philadelphia 1 / ATCC 33152 / DSM 7513).